A 194-amino-acid polypeptide reads, in one-letter code: Imidazoleglycerol-phosphate dehydratase (194 aa).

It belongs to the imidazoleglycerol-phosphate dehydratase family.

It localises to the cytoplasm. The enzyme catalyses D-erythro-1-(imidazol-4-yl)glycerol 3-phosphate = 3-(imidazol-4-yl)-2-oxopropyl phosphate + H2O. The protein operates within amino-acid biosynthesis; L-histidine biosynthesis; L-histidine from 5-phospho-alpha-D-ribose 1-diphosphate: step 6/9. The polypeptide is Imidazoleglycerol-phosphate dehydratase (Chlorobaculum parvum (strain DSM 263 / NCIMB 8327) (Chlorobium vibrioforme subsp. thiosulfatophilum)).